We begin with the raw amino-acid sequence, 145 residues long: 3-hydroxyacyl-[acyl-carrier-protein] dehydratase FabZ (145 aa).

The active site involves His-50.

The protein belongs to the thioester dehydratase family. FabZ subfamily.

The protein localises to the cytoplasm. It carries out the reaction a (3R)-hydroxyacyl-[ACP] = a (2E)-enoyl-[ACP] + H2O. Functionally, involved in unsaturated fatty acids biosynthesis. Catalyzes the dehydration of short chain beta-hydroxyacyl-ACPs and long chain saturated and unsaturated beta-hydroxyacyl-ACPs. This Coxiella burnetii (strain CbuK_Q154) (Coxiella burnetii (strain Q154)) protein is 3-hydroxyacyl-[acyl-carrier-protein] dehydratase FabZ.